Consider the following 353-residue polypeptide: Quinolinate synthase (353 aa).

Iminosuccinate-binding residues include His-47 and Ser-68. Cys-113 provides a ligand contact to [4Fe-4S] cluster. Residues 139-141 (YAN) and Ser-156 contribute to the iminosuccinate site. Cys-200 contacts [4Fe-4S] cluster. Iminosuccinate-binding positions include 226–228 (HPE) and Thr-243. Cys-297 contacts [4Fe-4S] cluster.

Belongs to the quinolinate synthase family. Type 1 subfamily. [4Fe-4S] cluster is required as a cofactor.

The protein localises to the cytoplasm. It carries out the reaction iminosuccinate + dihydroxyacetone phosphate = quinolinate + phosphate + 2 H2O + H(+). The protein operates within cofactor biosynthesis; NAD(+) biosynthesis; quinolinate from iminoaspartate: step 1/1. Its function is as follows. Catalyzes the condensation of iminoaspartate with dihydroxyacetone phosphate to form quinolinate. The chain is Quinolinate synthase from Vibrio cholerae serotype O1 (strain ATCC 39541 / Classical Ogawa 395 / O395).